The following is a 79-amino-acid chain: UPF0401 protein YkfF (79 aa).

This sequence belongs to the UPF0401 family.

In Escherichia coli (strain K12), this protein is UPF0401 protein YkfF (ykfF).